The following is a 345-amino-acid chain: Probable dual-specificity RNA methyltransferase RlmN (345 aa).

The active-site Proton acceptor is Glu93. The Radical SAM core domain maps to 99–326 (DDERATLCIS…TTIRASRGED (228 aa)). The cysteines at positions 106 and 331 are disulfide-linked. Positions 113, 117, and 120 each coordinate [4Fe-4S] cluster. Residues 158–159 (GE), Ser190, 212–214 (SLH), and His288 each bind S-adenosyl-L-methionine. Cys331 serves as the catalytic S-methylcysteine intermediate.

Belongs to the radical SAM superfamily. RlmN family. [4Fe-4S] cluster is required as a cofactor.

It localises to the cytoplasm. The enzyme catalyses adenosine(2503) in 23S rRNA + 2 reduced [2Fe-2S]-[ferredoxin] + 2 S-adenosyl-L-methionine = 2-methyladenosine(2503) in 23S rRNA + 5'-deoxyadenosine + L-methionine + 2 oxidized [2Fe-2S]-[ferredoxin] + S-adenosyl-L-homocysteine. It carries out the reaction adenosine(37) in tRNA + 2 reduced [2Fe-2S]-[ferredoxin] + 2 S-adenosyl-L-methionine = 2-methyladenosine(37) in tRNA + 5'-deoxyadenosine + L-methionine + 2 oxidized [2Fe-2S]-[ferredoxin] + S-adenosyl-L-homocysteine. Its function is as follows. Specifically methylates position 2 of adenine 2503 in 23S rRNA and position 2 of adenine 37 in tRNAs. In Bacteroides thetaiotaomicron (strain ATCC 29148 / DSM 2079 / JCM 5827 / CCUG 10774 / NCTC 10582 / VPI-5482 / E50), this protein is Probable dual-specificity RNA methyltransferase RlmN.